The following is a 736-amino-acid chain: Subtilisin-like protease SBT4.11 (736 aa).

Residues 1 to 25 form the signal peptide; the sequence is MAKRGAFSSFHSFLIVLLFLNSVLA. A propeptide spans 26–113 (activation peptide); that stretch reads VTHGHQDKQV…VFPNKKLKLQ (88 aa). In terms of domain architecture, Inhibitor I9 spans 35–112; that stretch reads VYIVYMGSLP…SVFPNKKLKL (78 aa). Positions 117–579 constitute a Peptidase S8 domain; it reads SWDFMGLKEG…AGHVDPIAAT (463 aa). The active-site Charge relay system is Asp-145. Residue Asn-176 is glycosylated (N-linked (GlcNAc...) asparagine). Residue His-200 is the Charge relay system of the active site. N-linked (GlcNAc...) asparagine glycans are attached at residues Asn-215 and Asn-223. One can recognise a PA domain in the interval 355-437; that stretch reads KFPLVYGKSA…GLQKDDFESV (83 aa). Ser-518 acts as the Charge relay system in catalysis. N-linked (GlcNAc...) asparagine glycosylation is found at Asn-555, Asn-602, Asn-638, Asn-646, and Asn-656.

This sequence belongs to the peptidase S8 family. The C-terminal propeptide is autocleaved.

The protein localises to the secreted. This Arabidopsis thaliana (Mouse-ear cress) protein is Subtilisin-like protease SBT4.11.